A 318-amino-acid chain; its full sequence is MATDGTGVVTVYGSGTNGAALLEPSNHKSATFSVKVGLAQMLRGGVIMDVVTPEQARIAEEAGACAVMALERVPADIRAQGGVARMSDPGLIRDIKRAVTIPVMAKARIGHFVEAQILEAIGVDYVDESEVLTLADDAHHINKHNFRVPFVCGCRDLGEALRRIREGAAMIRTKGEAGTGNVVEAVRHVRSVMGDIRALRNMDDDEVFSYAKRIAAPYDLVMQTKQLGRLPVVQFAAGGVATPADAALMMQLGCDGVFVGSGIFKSGDPARRARAIVQAVTHYSDPKILAEVSSGLGEAMVGINLSDPKVERFAARSE.

Aspartate 49 contacts D-ribose 5-phosphate. Lysine 106 functions as the Schiff-base intermediate with D-ribose 5-phosphate in the catalytic mechanism. Position 178 (glycine 178) interacts with D-ribose 5-phosphate. Arginine 190 serves as a coordination point for D-glyceraldehyde 3-phosphate. Residues glycine 239 and glycine 260–serine 261 each bind D-ribose 5-phosphate.

Belongs to the PdxS/SNZ family.

The enzyme catalyses aldehydo-D-ribose 5-phosphate + D-glyceraldehyde 3-phosphate + L-glutamine = pyridoxal 5'-phosphate + L-glutamate + phosphate + 3 H2O + H(+). The protein operates within cofactor biosynthesis; pyridoxal 5'-phosphate biosynthesis. Functionally, catalyzes the formation of pyridoxal 5'-phosphate from ribose 5-phosphate (RBP), glyceraldehyde 3-phosphate (G3P) and ammonia. The ammonia is provided by PDX2. Can also use ribulose 5-phosphate and dihydroxyacetone phosphate as substrates, resulting from enzyme-catalyzed isomerization of RBP and G3P, respectively. Also plays an indirect role in resistance to singlet oxygen-generating photosensitizers. The polypeptide is Probable pyridoxal 5'-phosphate synthase subunit PDX1.1 (PDX11) (Oryza sativa subsp. japonica (Rice)).